Here is a 141-residue protein sequence, read N- to C-terminus: Aspartate 1-decarboxylase (141 aa).

Ser25 serves as the catalytic Schiff-base intermediate with substrate; via pyruvic acid. Position 25 is a pyruvic acid (Ser) (Ser25). Thr57 provides a ligand contact to substrate. The active-site Proton donor is the Tyr58. Residue Gly73–Ala75 coordinates substrate.

This sequence belongs to the PanD family. As to quaternary structure, heterooctamer of four alpha and four beta subunits. Pyruvate is required as a cofactor. In terms of processing, is synthesized initially as an inactive proenzyme, which is activated by self-cleavage at a specific serine bond to produce a beta-subunit with a hydroxyl group at its C-terminus and an alpha-subunit with a pyruvoyl group at its N-terminus.

Its subcellular location is the cytoplasm. It catalyses the reaction L-aspartate + H(+) = beta-alanine + CO2. It participates in cofactor biosynthesis; (R)-pantothenate biosynthesis; beta-alanine from L-aspartate: step 1/1. Functionally, catalyzes the pyruvoyl-dependent decarboxylation of aspartate to produce beta-alanine. The polypeptide is Aspartate 1-decarboxylase (Pseudarthrobacter chlorophenolicus (strain ATCC 700700 / DSM 12829 / CIP 107037 / JCM 12360 / KCTC 9906 / NCIMB 13794 / A6) (Arthrobacter chlorophenolicus)).